The primary structure comprises 290 residues: Glycine--tRNA ligase alpha subunit (290 aa).

Belongs to the class-II aminoacyl-tRNA synthetase family. In terms of assembly, tetramer of two alpha and two beta subunits.

It localises to the cytoplasm. It catalyses the reaction tRNA(Gly) + glycine + ATP = glycyl-tRNA(Gly) + AMP + diphosphate. The protein is Glycine--tRNA ligase alpha subunit of Maridesulfovibrio salexigens (strain ATCC 14822 / DSM 2638 / NCIMB 8403 / VKM B-1763) (Desulfovibrio salexigens).